Here is a 380-residue protein sequence, read N- to C-terminus: Crotonobetainyl-CoA reductase (380 aa).

This sequence belongs to the acyl-CoA dehydrogenase family. Homotetramer. Requires FAD as cofactor.

Its subcellular location is the cytoplasm. The catalysed reaction is 4-(trimethylamino)butanoyl-CoA + oxidized [electron-transfer flavoprotein] + H(+) = crotonobetainyl-CoA + reduced [electron-transfer flavoprotein]. The protein operates within amine and polyamine metabolism; carnitine metabolism. Functionally, catalyzes the reduction of crotonobetainyl-CoA to gamma-butyrobetainyl-CoA. The polypeptide is Crotonobetainyl-CoA reductase (Salmonella agona (strain SL483)).